A 146-amino-acid polypeptide reads, in one-letter code: Large ribosomal subunit protein uL23B (146 aa).

The tract at residues 1 to 22 (MAPSSNKVGKAIQAKKAVVKGS) is disordered.

This sequence belongs to the universal ribosomal protein uL23 family.

In terms of biological role, this protein binds to a specific region on the 26S rRNA. This is Large ribosomal subunit protein uL23B (rpl-23A.2) from Caenorhabditis elegans.